A 509-amino-acid polypeptide reads, in one-letter code: Proton-gated ion channel subunit pbo-5 (509 aa).

An N-terminal signal peptide occupies residues 1–21 (MTRLSILQHLLTFLILSKINA). The Extracellular portion of the chain corresponds to 22–275 (TSTTESYFDS…ISLKRRPLFY (254 aa)). The cysteines at positions 193 and 207 are disulfide-linked. 3 consecutive transmembrane segments (helical) span residues 276–296 (MVTLTFPSYIMCAISVVGLFA), 310–330 (LGVTAILTMAVLSLVVSEKVP), and 336–356 (VPLLVAYFLFNMVIVSIAAMT). Residues 357-487 (TGIVMKVHRL…GYVRISERLD (131 aa)) lie on the Cytoplasmic side of the membrane. The helical transmembrane segment at 488–508 (ILFMFLFLSTVTIPVAVLFYL) threads the bilayer.

It belongs to the ligand-gated ion channel (TC 1.A.9) family. Acetylcholine receptor (TC 1.A.9.1) subfamily. The functional channel is a heterooligomer of pbo-5 and pbo-6. May self-associate to form homooligomers with negligible ion channel activity. In terms of tissue distribution, expressed in the posterior body muscles. Also detected in the RIFL, RIFR and RIS head neurons.

The protein localises to the membrane. Its function is as follows. Forms a proton-gated ion channel with pbo-6 that is activated by acidification of the posterior coelomic space, leading to posterior body wall muscle contraction (pBoc) during the defecation cycle. Probably by regulating the defecation motor program, required for fatty acid uptake by intestinal cells. Does not bind neurotransmitters such as acetylcholine, gamma-aminobutyric acid, glycine, serotonin, glutamate or choline. This Caenorhabditis elegans protein is Proton-gated ion channel subunit pbo-5.